A 145-amino-acid chain; its full sequence is Probable thioredoxin-2 (145 aa).

Residues 39 to 144 (VFDIDSVEDF…LDDFIEDVLA (106 aa)) form the Thioredoxin domain. Residues Cys-68 and Cys-71 each act as nucleophile in the active site. The cysteines at positions 68 and 71 are disulfide-linked.

This sequence belongs to the thioredoxin family.

In terms of biological role, participates in various redox reactions through the reversible oxidation of its active center dithiol to a disulfide and catalyzes dithiol-disulfide exchange reactions. The protein is Probable thioredoxin-2 (trx-2) of Caenorhabditis elegans.